The chain runs to 208 residues: Uracil phosphoribosyltransferase (208 aa).

Residues arginine 78, arginine 103, and 130–138 (DPMLATGGS) contribute to the 5-phospho-alpha-D-ribose 1-diphosphate site. Uracil-binding positions include isoleucine 193 and 198–200 (GDA). Position 199 (aspartate 199) interacts with 5-phospho-alpha-D-ribose 1-diphosphate.

It belongs to the UPRTase family. Requires Mg(2+) as cofactor.

The enzyme catalyses UMP + diphosphate = 5-phospho-alpha-D-ribose 1-diphosphate + uracil. It participates in pyrimidine metabolism; UMP biosynthesis via salvage pathway; UMP from uracil: step 1/1. With respect to regulation, allosterically activated by GTP. Its function is as follows. Catalyzes the conversion of uracil and 5-phospho-alpha-D-ribose 1-diphosphate (PRPP) to UMP and diphosphate. The polypeptide is Uracil phosphoribosyltransferase (Shewanella putrefaciens (strain CN-32 / ATCC BAA-453)).